The sequence spans 214 residues: MSLGLVGRKVGMTRIFTDDGDSIPVTVVEVGDNRVTQIKTDETDGYTAVQVTFGSRRASRVTKPLAGHLAKAGVEAGEVIKEFRIDAAKAAELQAGSSLSVDLFQVGQKIDVQGVSIGKGYAGTIKRHHFASGRATHGNSRSHNVPGSIGMAQDPGRVFPGKRMTGHLGDATRTVQNLEIAKIDAERKLLLVKGAIPGSKGGKVIVTPAVKAKA.

The segment at 133–153 (GRATHGNSRSHNVPGSIGMAQ) is disordered. Gln-153 is subject to N5-methylglutamine.

The protein belongs to the universal ribosomal protein uL3 family. In terms of assembly, part of the 50S ribosomal subunit. Forms a cluster with proteins L14 and L19. Methylated by PrmB.

Functionally, one of the primary rRNA binding proteins, it binds directly near the 3'-end of the 23S rRNA, where it nucleates assembly of the 50S subunit. This chain is Large ribosomal subunit protein uL3, found in Cupriavidus metallidurans (strain ATCC 43123 / DSM 2839 / NBRC 102507 / CH34) (Ralstonia metallidurans).